A 122-amino-acid chain; its full sequence is Large ribosomal subunit protein uL14 (122 aa).

This sequence belongs to the universal ribosomal protein uL14 family. In terms of assembly, part of the 50S ribosomal subunit. Forms a cluster with proteins L3 and L19. In the 70S ribosome, L14 and L19 interact and together make contacts with the 16S rRNA in bridges B5 and B8.

Functionally, binds to 23S rRNA. Forms part of two intersubunit bridges in the 70S ribosome. The sequence is that of Large ribosomal subunit protein uL14 from Hahella chejuensis (strain KCTC 2396).